The primary structure comprises 101 residues: Urease subunit beta (101 aa).

The protein belongs to the urease beta subunit family. In terms of assembly, heterotrimer of UreA (gamma), UreB (beta) and UreC (alpha) subunits. Three heterotrimers associate to form the active enzyme.

It is found in the cytoplasm. The enzyme catalyses urea + 2 H2O + H(+) = hydrogencarbonate + 2 NH4(+). It functions in the pathway nitrogen metabolism; urea degradation; CO(2) and NH(3) from urea (urease route): step 1/1. In Cereibacter sphaeroides (strain ATCC 17025 / ATH 2.4.3) (Rhodobacter sphaeroides), this protein is Urease subunit beta.